Here is a 403-residue protein sequence, read N- to C-terminus: 26S proteasome regulatory subunit 8 (403 aa).

G186 to T193 serves as a coordination point for ATP.

The protein belongs to the AAA ATPase family.

Its subcellular location is the cytoplasm. It localises to the nucleus. The 26S proteasome is involved in the ATP-dependent degradation of ubiquitinated proteins. The regulatory (or ATPase) complex confers ATP dependency and substrate specificity to the 26S complex. In Dictyostelium discoideum (Social amoeba), this protein is 26S proteasome regulatory subunit 8 (psmC5).